Reading from the N-terminus, the 272-residue chain is Undecaprenyl-diphosphatase (272 aa).

8 consecutive transmembrane segments (helical) span residues 5-25, 45-65, 88-108, 115-135, 152-171, 189-209, 221-241, and 251-271; these read YSLFVAFVLGVVEGLTEFLPV, AKTFEVIIQLGSILAVVVVFW, HLTLGHILLAMIPAVGLGLAF, LFNPQSVMYALVAGGLLLLAA, TYRQAFAIGCFQCLALWPGF, YAASEFSFILAVPMMLGASGL, GDLPMFAVGFITAFVVALIAI, and ISFVPFAIYRFIVAAAVYWVF.

Belongs to the UppP family.

It is found in the cell inner membrane. It carries out the reaction di-trans,octa-cis-undecaprenyl diphosphate + H2O = di-trans,octa-cis-undecaprenyl phosphate + phosphate + H(+). In terms of biological role, catalyzes the dephosphorylation of undecaprenyl diphosphate (UPP). Confers resistance to bacitracin. The protein is Undecaprenyl-diphosphatase of Yersinia enterocolitica serotype O:8 / biotype 1B (strain NCTC 13174 / 8081).